The primary structure comprises 306 residues: Aspartate carbamoyltransferase catalytic subunit (306 aa).

Residues Arg56 and Thr57 each contribute to the carbamoyl phosphate site. An L-aspartate-binding site is contributed by Lys84. 3 residues coordinate carbamoyl phosphate: Arg106, His134, and Gln137. L-aspartate-binding residues include Arg167 and Arg221. The carbamoyl phosphate site is built by Gly262 and Pro263.

Belongs to the aspartate/ornithine carbamoyltransferase superfamily. ATCase family. As to quaternary structure, heterododecamer (2C3:3R2) of six catalytic PyrB chains organized as two trimers (C3), and six regulatory PyrI chains organized as three dimers (R2).

It catalyses the reaction carbamoyl phosphate + L-aspartate = N-carbamoyl-L-aspartate + phosphate + H(+). It functions in the pathway pyrimidine metabolism; UMP biosynthesis via de novo pathway; (S)-dihydroorotate from bicarbonate: step 2/3. Its function is as follows. Catalyzes the condensation of carbamoyl phosphate and aspartate to form carbamoyl aspartate and inorganic phosphate, the committed step in the de novo pyrimidine nucleotide biosynthesis pathway. The sequence is that of Aspartate carbamoyltransferase catalytic subunit from Desulforudis audaxviator (strain MP104C).